The following is a 707-amino-acid chain: MPGIDKLPIEETLEDSPQTRSLLGVFEEDATAISNYMNQLYQAMHRIYDAQNELSAATHLTSKLLKEYEKQRFPLGGDDEVMSSTLQQFSKVIDELSSCHAVLSTQLADAMMFPISQFKERDLKEILTLKEVFQIASNDHDAAINRYSRLSKKRENDKVKYEVTEDVYTSRKKQHQTMMHYFCALNTLQYKKKIALLEPLLGYMQAQISFFKMGSENLNGQLEEFLANIGTSVQNVRREMDGDVETMQQTIEDLEVASDPLYLPDPDPTKFPINRNLTRKAGYLNARNKTGLVSSTWDRQFYFTQGGNLMSQARGDVAGGLAMDIDNCSVMAVDCEDRRYCFQITSFDGKKSSILQAESKKDHEEWICTINNISKQIYLSENPEETAARVNQSALEAVTPSPSFQQRHESLRPGGQSRPPTARTSSSGSLGSESTNLAALSLDSLVAPDTPIQFDIISPVCEDQPGQAKAFGQGGRRTNPFGESGGSTKSETEDSILHQLFIVRFLGSMEVKSDDHPDVVYETMRQILAARAIHNIFRMTESHLLVTCDCLKLIDPQTQVTRLTFPLPCVVLYATHQENKRLFGFVLRTSGGRSESNLSSVCYIFESNNEGEKICDSVGLAKQIALHAELDRRASEKQKEIERVKEKQQKELSKQKQIEKDLEEQSRLIAASSRPNQAGSEGQLVLSSSQSEESDLGEEGKKRESEA.

The tract at residues Met1–Gly428 is required for RAB5A binding. Residues Gly3–Pro268 form the BAR domain. Residues Gln234–Ala257 are a coiled coil. In terms of domain architecture, PH spans Leu277–Lys375. Disordered regions lie at residues Ala397–Glu433, Gly466–Ser490, and Glu636–Ala707. A Phosphothreonine modification is found at Thr399. Residue Ser401 is modified to Phosphoserine. Positions Ser403–Gly414 match the F&amp;H motif. At Ser410 the chain carries Phosphoserine; by PKA. The 161-residue stretch at Ser495 to Gln655 folds into the PID domain. Residues Leu620–Ala670 adopt a coiled-coil conformation. The segment covering Glu636 to Ser666 has biased composition (basic and acidic residues). The segment covering Gly679–Ser691 has biased composition (low complexity). Phosphoserine is present on residues Ser691 and Ser694. A compositionally biased stretch (basic and acidic residues) spans Glu698–Ala707.

In terms of assembly, homodimer. Binds RAB5A/Rab5 through an N-terminal domain. This interaction is essential for its recruitment to endosomal membranes as well as its role in cell proliferation. Binds DCC and the catalytic domain of the inactive form of AKT2 through its PID domain. Binds PIK3CA and subunits of the NuRD/MeCP1 complex. Interacts with OCRL and INPP5B. Interacts with NTRK2. Interacts with APPL2; interaction is independent of follicle stimulating hormone stimulation; interaction is decreased by adiponectin in a time-dependent manner. Forms a complex with APPL2 and RUVBL2. Forms a complex comprising APPL2, RUVBL2, CTNNB1, HDAC1 and HDAC2; interaction reduces interaction between CTNNB1, HDAC1, HDAC2 and RUVBL2 leading to the decrease of deacetylase activity of this complex; affects the recruitment of repressive complexes to the Wnt target genes. Interacts with ANXA2. Interacts with TGFBR1; interaction is TGF beta dependent; mediates trafficking of the TGFBR1 from the endosomes to the nucleus via microtubules in a TRAF6-dependent manner. Interacts with PRKCZ. Interacts with PIK3R1 and APPL2. Interacts with ADIPOR1; ADIPOQ enhances this interaction; inhibites adiponectin-stimulated binding of APPL2 to ADIPOR1. Phosphorylation at Ser-410 by PKA severely impairs binding to OCRL. In terms of tissue distribution, expressed in insulin-target tissues including skeletal muscle, liver, fat, and brain.

The protein resides in the early endosome membrane. It is found in the nucleus. Its subcellular location is the cytoplasm. The protein localises to the endosome. It localises to the cell projection. The protein resides in the ruffle. It is found in the cytoplasmic vesicle. Its subcellular location is the phagosome. Its function is as follows. Multifunctional adapter protein that binds to various membrane receptors, nuclear factors and signaling proteins to regulate many processes, such as cell proliferation, immune response, endosomal trafficking and cell metabolism. Regulates signaling pathway leading to cell proliferation through interaction with RAB5A and subunits of the NuRD/MeCP1 complex. Functions as a positive regulator of innate immune response via activation of AKT1 signaling pathway by forming a complex with APPL1 and PIK3R1. Inhibits Fc-gamma receptor-mediated phagocytosis through PI3K/Akt signaling in macrophages. Regulates TLR4 signaling in activated macrophages. Involved in trafficking of the TGFBR1 from the endosomes to the nucleus via microtubules in a TRAF6-dependent manner. Plays a role in cell metabolism by regulating adiponecting and insulin signaling pathways. Required for fibroblast migration through HGF cell signaling. Positive regulator of beta-catenin/TCF-dependent transcription through direct interaction with RUVBL2/reptin resulting in the relief of RUVBL2-mediated repression of beta-catenin/TCF target genes by modulating the interactions within the beta-catenin-reptin-HDAC complex. This Mus musculus (Mouse) protein is DCC-interacting protein 13-alpha.